Consider the following 153-residue polypeptide: Type II secretion system core protein G (153 aa).

Positions 1-7 are cleaved as a propeptide — leader sequence; that stretch reads MERRQRG. At phenylalanine 8 the chain carries N-methylphenylalanine. The helical transmembrane segment at 8 to 28 threads the bilayer; sequence FTLLEIMVVIVILGVLASLVV. Disordered regions lie at residues 68-91 and 126-153; these read EQGL…PQDG and MPDT…NGNP. Over residues 134 to 143 the composition is skewed to low complexity; the sequence is GNWNVGNGAH. Over residues 144 to 153 the composition is skewed to gly residues; sequence NNGGNGNGNP.

It belongs to the GSP G family. Type II secretion system is composed of four main components: the outer membrane complex, the inner membrane complex, the cytoplasmic secretion ATPase and the periplasm-spanning pseudopilus. Forms homomultimers. In terms of processing, cleaved by the prepilin peptidase. Methylated by prepilin peptidase at the amino group of the N-terminal phenylalanine once the leader sequence is cleaved.

The protein resides in the cell inner membrane. Its function is as follows. Core component of the type II secretion system required for the energy-dependent secretion of extracellular factors such as proteases and toxins from the periplasm. Pseudopilin (pilin-like) protein that polymerizes to form the pseudopilus. Further polymerization triggers pseudopilus growth. This Dickeya chrysanthemi (Pectobacterium chrysanthemi) protein is Type II secretion system core protein G (outG).